A 425-amino-acid polypeptide reads, in one-letter code: Glutamate-1-semialdehyde 2,1-aminomutase (425 aa).

N6-(pyridoxal phosphate)lysine is present on Lys-264.

The protein belongs to the class-III pyridoxal-phosphate-dependent aminotransferase family. HemL subfamily. In terms of assembly, homodimer. Pyridoxal 5'-phosphate is required as a cofactor.

The protein localises to the cytoplasm. It carries out the reaction (S)-4-amino-5-oxopentanoate = 5-aminolevulinate. It functions in the pathway porphyrin-containing compound metabolism; protoporphyrin-IX biosynthesis; 5-aminolevulinate from L-glutamyl-tRNA(Glu): step 2/2. The sequence is that of Glutamate-1-semialdehyde 2,1-aminomutase from Hydrogenobaculum sp. (strain Y04AAS1).